The sequence spans 1575 residues: Ras GTPase-activating-like protein IQGAP2 (1575 aa).

The residue at position 16 (Ser16) is a Phosphoserine. The region spanning 41–156 (LCHLEEAKRW…YCIHALSLYL (116 aa)) is the Calponin-homology (CH) domain. A Phosphothreonine modification is found at Thr356. One can recognise a WW domain in the interval 594-627 (VSSDGSWLKLNLHKKYDYYYNTDSKESSWVTPES). Residues Ser595, Ser599, and Ser685 each carry the phosphoserine modification. 3 consecutive IQ domains span residues 690-719 (QEEN…TFID), 720-749 (NTDS…YFRD), and 750-779 (HNNE…SENP). Position 716 is a phosphothreonine (Thr716). Phosphothreonine occurs at positions 782, 881, 1002, and 1269. The 250-residue stretch at 933–1182 (YLLLKLFKTA…QEFRKYFKEA (250 aa)) folds into the Ras-GAP domain. Phosphoserine is present on residues Ser1271, Ser1279, Ser1358, and Ser1461.

As to expression, isoform 2 expression is enhanced in testis.

In terms of biological role, binds to activated CDC42 and RAC1 but does not seem to stimulate their GTPase activity. Associates with calmodulin. In Homo sapiens (Human), this protein is Ras GTPase-activating-like protein IQGAP2 (IQGAP2).